The primary structure comprises 474 residues: 3-isopropylmalate dehydratase large subunit (474 aa).

[4Fe-4S] cluster-binding residues include Cys353, Cys414, and Cys417.

The protein belongs to the aconitase/IPM isomerase family. LeuC type 1 subfamily. As to quaternary structure, heterodimer of LeuC and LeuD. It depends on [4Fe-4S] cluster as a cofactor.

It carries out the reaction (2R,3S)-3-isopropylmalate = (2S)-2-isopropylmalate. It participates in amino-acid biosynthesis; L-leucine biosynthesis; L-leucine from 3-methyl-2-oxobutanoate: step 2/4. In terms of biological role, catalyzes the isomerization between 2-isopropylmalate and 3-isopropylmalate, via the formation of 2-isopropylmaleate. The protein is 3-isopropylmalate dehydratase large subunit of Pseudomonas paraeruginosa (strain DSM 24068 / PA7) (Pseudomonas aeruginosa (strain PA7)).